The primary structure comprises 250 residues: MAVTKLVLVRHGESQWNKENRFTGWYDVDLSEKGVSEAKAAGKLLKEEGYSFDFAYTSVLKRAIHTLWNVLDELDQAWLPVEKSWKLNERHYGALQGLNKAETAEKYGDEQVKQWRRGFAVTPPELTKDDERYPGHDPRYAKLSEKELPLTESLALTIDRVIPYWNETILPRMKSGERVIIAAHGNSLRALVKYLDNMSEEGILELNIPTGVPLVYEFDENFKPLKRYYLGNADEIAAKAAAVANQGKAK.

Residues 10–17 (RHGESQWN), 23–24 (TG), R62, 89–92 (ERHY), K100, 116–117 (RR), and 185–186 (GN) contribute to the substrate site. The active-site Tele-phosphohistidine intermediate is the H11. The Proton donor/acceptor role is filled by E89.

Belongs to the phosphoglycerate mutase family. BPG-dependent PGAM subfamily. Homodimer.

The enzyme catalyses (2R)-2-phosphoglycerate = (2R)-3-phosphoglycerate. It participates in carbohydrate degradation; glycolysis; pyruvate from D-glyceraldehyde 3-phosphate: step 3/5. Its function is as follows. Catalyzes the interconversion of 2-phosphoglycerate and 3-phosphoglycerate. This is 2,3-bisphosphoglycerate-dependent phosphoglycerate mutase from Shigella dysenteriae serotype 1 (strain Sd197).